Reading from the N-terminus, the 186-residue chain is ATP synthase subunit delta (186 aa).

The protein belongs to the ATPase delta chain family. F-type ATPases have 2 components, F(1) - the catalytic core - and F(0) - the membrane proton channel. F(1) has five subunits: alpha(3), beta(3), gamma(1), delta(1), epsilon(1). F(0) has three main subunits: a(1), b(2) and c(10-14). The alpha and beta chains form an alternating ring which encloses part of the gamma chain. F(1) is attached to F(0) by a central stalk formed by the gamma and epsilon chains, while a peripheral stalk is formed by the delta and b chains.

It is found in the cell inner membrane. Its function is as follows. F(1)F(0) ATP synthase produces ATP from ADP in the presence of a proton or sodium gradient. F-type ATPases consist of two structural domains, F(1) containing the extramembraneous catalytic core and F(0) containing the membrane proton channel, linked together by a central stalk and a peripheral stalk. During catalysis, ATP synthesis in the catalytic domain of F(1) is coupled via a rotary mechanism of the central stalk subunits to proton translocation. In terms of biological role, this protein is part of the stalk that links CF(0) to CF(1). It either transmits conformational changes from CF(0) to CF(1) or is implicated in proton conduction. This Bacteroides thetaiotaomicron (strain ATCC 29148 / DSM 2079 / JCM 5827 / CCUG 10774 / NCTC 10582 / VPI-5482 / E50) protein is ATP synthase subunit delta.